A 558-amino-acid polypeptide reads, in one-letter code: Ankyrin repeat protein OPG189 (558 aa).

ANK repeat units follow at residues 65-95 (YGENILHIYSMDDANTNIIIFFLDRVLNINK), 169-205 (YGCTLLHRCIYHYKKSESESYNELIKILLNNGSDVDK), 209-239 (YGNTPFILLCKHDINNVELFEICLENANIDS), 243-272 (NRYTPLHYVSCRNKYDFVKLLISKGANVNA), 276-304 (FGTTPFYCGIIHGISLIKLYLESDTELEI), 339-368 (YNETSIYDAVSYNAYNTLVYLLNRNGDFET), and 372-401 (SGCTCISEAVANNNKIIMEVLLSKRPSLKI).

The protein belongs to the orthopoxvirus OPG189 protein family.

Functionally, contributes to viral release without involving rearrangement of host actin. This chain is Ankyrin repeat protein OPG189 (OPG189), found in Vaccinia virus (strain Western Reserve) (VACV).